Reading from the N-terminus, the 494-residue chain is Probable cytosol aminopeptidase (494 aa).

Mn(2+)-binding residues include lysine 260 and aspartate 265. The active site involves lysine 272. Positions 283, 342, and 344 each coordinate Mn(2+). Arginine 346 is a catalytic residue.

This sequence belongs to the peptidase M17 family. Mn(2+) is required as a cofactor.

The protein resides in the cytoplasm. The enzyme catalyses Release of an N-terminal amino acid, Xaa-|-Yaa-, in which Xaa is preferably Leu, but may be other amino acids including Pro although not Arg or Lys, and Yaa may be Pro. Amino acid amides and methyl esters are also readily hydrolyzed, but rates on arylamides are exceedingly low.. It carries out the reaction Release of an N-terminal amino acid, preferentially leucine, but not glutamic or aspartic acids.. Its function is as follows. Presumably involved in the processing and regular turnover of intracellular proteins. Catalyzes the removal of unsubstituted N-terminal amino acids from various peptides. This chain is Probable cytosol aminopeptidase, found in Bacillus cereus (strain Q1).